The following is a 298-amino-acid chain: Tyrosine recombinase XerC (298 aa).

In terms of domain architecture, Core-binding (CB) spans 1 to 84 (MNHIQEAFLN…TLRTFYEYWM (84 aa)). The Tyr recombinase domain occupies 105–286 (YLPQFFYEEE…SNQQLRKVYL (182 aa)). Residues arginine 145, lysine 169, histidine 238, arginine 241, and histidine 264 contribute to the active site. Tyrosine 273 acts as the O-(3'-phospho-DNA)-tyrosine intermediate in catalysis.

The protein belongs to the 'phage' integrase family. XerC subfamily. Forms a cyclic heterotetrameric complex composed of two molecules of XerC and two molecules of XerD.

Its subcellular location is the cytoplasm. Site-specific tyrosine recombinase, which acts by catalyzing the cutting and rejoining of the recombining DNA molecules. The XerC-XerD complex is essential to convert dimers of the bacterial chromosome into monomers to permit their segregation at cell division. It also contributes to the segregational stability of plasmids. In Staphylococcus aureus (strain JH1), this protein is Tyrosine recombinase XerC.